The following is a 71-amino-acid chain: uncharacterized protein (71 aa).

The first 23 residues, M1–L23, serve as a signal peptide directing secretion. N-linked (GlcNAc...) asparagine glycans are attached at residues N20, N28, N44, and N50.

The protein localises to the secreted. This is an uncharacterized protein from Dictyostelium discoideum (Social amoeba).